We begin with the raw amino-acid sequence, 220 residues long: Fructose-6-phosphate aldolase (220 aa).

The active-site Schiff-base intermediate with substrate is the Lys85.

Belongs to the transaldolase family. Type 3A subfamily. Homodecamer.

It is found in the cytoplasm. It catalyses the reaction beta-D-fructose 6-phosphate = dihydroxyacetone + D-glyceraldehyde 3-phosphate. In terms of biological role, catalyzes the reversible formation of fructose 6-phosphate from dihydroxyacetone and D-glyceraldehyde 3-phosphate via an aldolization reaction. The protein is Fructose-6-phosphate aldolase of Salmonella heidelberg (strain SL476).